The sequence spans 414 residues: uncharacterized protein (414 aa).

The chain crosses the membrane as a helical span at residues 367-384 (TTWALTLICIACILLFFV).

It localises to the virion membrane. This is an uncharacterized protein from Human cytomegalovirus (strain Merlin) (HHV-5).